The primary structure comprises 513 residues: GMP synthase [glutamine-hydrolyzing] (513 aa).

The Glutamine amidotransferase type-1 domain occupies Ser3 to Asp200. The active-site Nucleophile is the Cys80. Active-site residues include His174 and Glu176. One can recognise a GMPS ATP-PPase domain in the interval Trp201–Arg388. Ser228–Thr234 provides a ligand contact to ATP.

Homodimer.

The enzyme catalyses XMP + L-glutamine + ATP + H2O = GMP + L-glutamate + AMP + diphosphate + 2 H(+). Its pathway is purine metabolism; GMP biosynthesis; GMP from XMP (L-Gln route): step 1/1. Its function is as follows. Catalyzes the synthesis of GMP from XMP. This is GMP synthase [glutamine-hydrolyzing] from Pelodictyon phaeoclathratiforme (strain DSM 5477 / BU-1).